A 493-amino-acid chain; its full sequence is GTPase Der (493 aa).

EngA-type G domains follow at residues 3-166 and 207-380; these read PVVA…SGKG and LKLA…DCAT. GTP contacts are provided by residues 9–16, 56–60, 118–121, 213–220, 260–264, and 325–328; these read GRPNVGKS, DTGGI, NKTD, GKPNVGKS, DTAGV, and NKWD. Positions 381–465 constitute a KH-like domain; it reads RRVNTSLLTR…PIRIQFKEGA (85 aa).

It belongs to the TRAFAC class TrmE-Era-EngA-EngB-Septin-like GTPase superfamily. EngA (Der) GTPase family. In terms of assembly, associates with the 50S ribosomal subunit.

GTPase that plays an essential role in the late steps of ribosome biogenesis. This is GTPase Der from Photorhabdus laumondii subsp. laumondii (strain DSM 15139 / CIP 105565 / TT01) (Photorhabdus luminescens subsp. laumondii).